We begin with the raw amino-acid sequence, 332 residues long: Adenosine deaminase (332 aa).

Zn(2+) is bound by residues H12 and H14. Substrate-binding residues include H14, D16, and G170. H197 contributes to the Zn(2+) binding site. E200 serves as the catalytic Proton donor. Zn(2+) is bound at residue D278. D279 contacts substrate.

It belongs to the metallo-dependent hydrolases superfamily. Adenosine and AMP deaminases family. Adenosine deaminase subfamily. The cofactor is Zn(2+).

The enzyme catalyses adenosine + H2O + H(+) = inosine + NH4(+). It catalyses the reaction 2'-deoxyadenosine + H2O + H(+) = 2'-deoxyinosine + NH4(+). Its function is as follows. Catalyzes the hydrolytic deamination of adenosine and 2-deoxyadenosine. In Erwinia tasmaniensis (strain DSM 17950 / CFBP 7177 / CIP 109463 / NCPPB 4357 / Et1/99), this protein is Adenosine deaminase.